The chain runs to 120 residues: UPF0231 protein YacL (120 aa).

It belongs to the UPF0231 family.

This Escherichia coli O81 (strain ED1a) protein is UPF0231 protein YacL.